The sequence spans 254 residues: Triosephosphate isomerase (254 aa).

10-12 provides a ligand contact to substrate; that stretch reads NWK. His-96 (electrophile) is an active-site residue. Glu-168 (proton acceptor) is an active-site residue. Residues Gly-174, Ser-214, and 235-236 contribute to the substrate site; that span reads GG.

Belongs to the triosephosphate isomerase family. As to quaternary structure, homodimer.

It is found in the cytoplasm. It carries out the reaction D-glyceraldehyde 3-phosphate = dihydroxyacetone phosphate. The protein operates within carbohydrate biosynthesis; gluconeogenesis. Its pathway is carbohydrate degradation; glycolysis; D-glyceraldehyde 3-phosphate from glycerone phosphate: step 1/1. Its function is as follows. Involved in the gluconeogenesis. Catalyzes stereospecifically the conversion of dihydroxyacetone phosphate (DHAP) to D-glyceraldehyde-3-phosphate (G3P). The protein is Triosephosphate isomerase of Rhodopirellula baltica (strain DSM 10527 / NCIMB 13988 / SH1).